The chain runs to 466 residues: Glutamate decarboxylase beta (466 aa).

Substrate-binding residues include Thr-62 and Asn-83. Residues 126 to 127, Thr-212, and His-275 contribute to the pyridoxal 5'-phosphate site; that span reads SS. Residue Lys-276 is modified to N6-(pyridoxal phosphate)lysine. N6-acetyllysine is present on residues Lys-446, Lys-453, and Lys-464.

The protein belongs to the group II decarboxylase family. As to quaternary structure, homohexamer composed of three dimers. The cofactor is pyridoxal 5'-phosphate.

The enzyme catalyses L-glutamate + H(+) = 4-aminobutanoate + CO2. Functionally, converts glutamate to gamma-aminobutyrate (GABA), consuming one intracellular proton in the reaction. The gad system helps to maintain a near-neutral intracellular pH when cells are exposed to extremely acidic conditions. The ability to survive transit through the acidic conditions of the stomach is essential for successful colonization of the mammalian host by commensal and pathogenic bacteria. The polypeptide is Glutamate decarboxylase beta (gadB) (Escherichia coli O6:H1 (strain CFT073 / ATCC 700928 / UPEC)).